We begin with the raw amino-acid sequence, 172 residues long: Large ribosomal subunit protein uL10 (172 aa).

The protein belongs to the universal ribosomal protein uL10 family. Part of the ribosomal stalk of the 50S ribosomal subunit. The N-terminus interacts with L11 and the large rRNA to form the base of the stalk. The C-terminus forms an elongated spine to which L12 dimers bind in a sequential fashion forming a multimeric L10(L12)X complex.

Functionally, forms part of the ribosomal stalk, playing a central role in the interaction of the ribosome with GTP-bound translation factors. This chain is Large ribosomal subunit protein uL10, found in Francisella tularensis subsp. holarctica (strain FTNF002-00 / FTA).